An 899-amino-acid chain; its full sequence is UPF0182 protein Mhun_1303 (899 aa).

7 helical membrane-spanning segments follow: residues 6–26 (LLIF…DLLS), 39–59 (VFLT…LLFF), 93–113 (VAAG…LAFL), 136–156 (LPFY…TLII), 196–216 (FLPQ…AFLW), 240–260 (ITIP…LLFL), and 271–291 (IAYG…AGFL).

This sequence belongs to the UPF0182 family.

The protein localises to the cell membrane. The protein is UPF0182 protein Mhun_1303 of Methanospirillum hungatei JF-1 (strain ATCC 27890 / DSM 864 / NBRC 100397 / JF-1).